The primary structure comprises 398 residues: Elongation factor Tu (398 aa).

In terms of domain architecture, tr-type G spans 10-207 (KPHVNIGTIG…TADEYIPEPE (198 aa)). A G1 region spans residues 19–26 (GHVDHGKT). 19-26 (GHVDHGKT) provides a ligand contact to GTP. Threonine 26 serves as a coordination point for Mg(2+). The G2 stretch occupies residues 63 to 67 (GITIN). Residues 84–87 (DAPG) are G3. GTP is bound by residues 84–88 (DAPGH) and 139–142 (NKID). The G4 stretch occupies residues 139 to 142 (NKID). A G5 region spans residues 177-179 (SAL).

It belongs to the TRAFAC class translation factor GTPase superfamily. Classic translation factor GTPase family. EF-Tu/EF-1A subfamily. As to quaternary structure, monomer.

The protein resides in the cytoplasm. It carries out the reaction GTP + H2O = GDP + phosphate + H(+). GTP hydrolase that promotes the GTP-dependent binding of aminoacyl-tRNA to the A-site of ribosomes during protein biosynthesis. The polypeptide is Elongation factor Tu (Streptococcus uberis (strain ATCC BAA-854 / 0140J)).